The primary structure comprises 346 residues: Tetraacyldisaccharide 4'-kinase (346 aa).

53 to 60 (TCGGTGKT) provides a ligand contact to ATP.

This sequence belongs to the LpxK family.

The enzyme catalyses a lipid A disaccharide + ATP = a lipid IVA + ADP + H(+). The protein operates within glycolipid biosynthesis; lipid IV(A) biosynthesis; lipid IV(A) from (3R)-3-hydroxytetradecanoyl-[acyl-carrier-protein] and UDP-N-acetyl-alpha-D-glucosamine: step 6/6. Transfers the gamma-phosphate of ATP to the 4'-position of a tetraacyldisaccharide 1-phosphate intermediate (termed DS-1-P) to form tetraacyldisaccharide 1,4'-bis-phosphate (lipid IVA). This chain is Tetraacyldisaccharide 4'-kinase, found in Bartonella tribocorum (strain CIP 105476 / IBS 506).